The sequence spans 241 residues: 2-heptyl-1-hydroxyquinolin-4(1H)-one methyltransferase (241 aa).

This sequence belongs to the methyltransferase superfamily. In terms of assembly, monomer.

The protein localises to the cytoplasm. The enzyme catalyses 2-heptyl-1-hydroxy-4(1H)-quinolinone + S-adenosyl-L-methionine = 2-heptyl-1-methoxy-4(1H)-quinolinone + S-adenosyl-L-homocysteine + H(+). Its function is as follows. Involved in cellular response to chemical stress and may contribute to resistance toward antimicrobial natural compounds as well as drugs. Catalyzes the methylation and detoxification of the P.aeruginosa toxin 2-heptyl-1-hydroxy-4(1H)-quinolinone (HQNO) to 2-heptyl-1-methoxy-4(1H)-quinolinone (HMOQ). The protein is 2-heptyl-1-hydroxyquinolin-4(1H)-one methyltransferase of Mycobacterium bovis (strain BCG / Pasteur 1173P2).